A 341-amino-acid chain; its full sequence is Probable sulfurtransferase (341 aa).

Positions 40, 42, 58, and 61 each coordinate Zn(2+). Gly-88 serves as a coordination point for ATP. Residues Cys-176 and Cys-179 each contribute to the [4Fe-4S] cluster site. Residues Arg-183 and Gly-202 each contribute to the ATP site. Cys-267 lines the [4Fe-4S] cluster pocket. Cys-316, Cys-319, Cys-328, and Cys-331 together coordinate Zn(2+).

Belongs to the TtcA family. Requires [4Fe-4S] cluster as cofactor. The cofactor is Mg(2+).

This Methanocaldococcus jannaschii (strain ATCC 43067 / DSM 2661 / JAL-1 / JCM 10045 / NBRC 100440) (Methanococcus jannaschii) protein is Probable sulfurtransferase.